The following is a 573-amino-acid chain: Proline--tRNA ligase (573 aa).

Belongs to the class-II aminoacyl-tRNA synthetase family. ProS type 1 subfamily. As to quaternary structure, homodimer.

It is found in the cytoplasm. It catalyses the reaction tRNA(Pro) + L-proline + ATP = L-prolyl-tRNA(Pro) + AMP + diphosphate. Catalyzes the attachment of proline to tRNA(Pro) in a two-step reaction: proline is first activated by ATP to form Pro-AMP and then transferred to the acceptor end of tRNA(Pro). As ProRS can inadvertently accommodate and process non-cognate amino acids such as alanine and cysteine, to avoid such errors it has two additional distinct editing activities against alanine. One activity is designated as 'pretransfer' editing and involves the tRNA(Pro)-independent hydrolysis of activated Ala-AMP. The other activity is designated 'posttransfer' editing and involves deacylation of mischarged Ala-tRNA(Pro). The misacylated Cys-tRNA(Pro) is not edited by ProRS. This Geobacter sp. (strain M21) protein is Proline--tRNA ligase.